A 262-amino-acid polypeptide reads, in one-letter code: Shikimate dehydrogenase (NADP(+)) (262 aa).

Shikimate-binding positions include serine 15–serine 17 and threonine 62. Residue lysine 66 is the Proton acceptor of the active site. Glutamate 78 is an NADP(+) binding site. Shikimate-binding residues include asparagine 87 and aspartate 102. Residues glycine 126 to alanine 130, asparagine 150 to arginine 155, and methionine 214 each bind NADP(+). Residue tyrosine 216 participates in shikimate binding. Residue glycine 236 coordinates NADP(+).

This sequence belongs to the shikimate dehydrogenase family. As to quaternary structure, homodimer.

The catalysed reaction is shikimate + NADP(+) = 3-dehydroshikimate + NADPH + H(+). Its pathway is metabolic intermediate biosynthesis; chorismate biosynthesis; chorismate from D-erythrose 4-phosphate and phosphoenolpyruvate: step 4/7. Functionally, involved in the biosynthesis of the chorismate, which leads to the biosynthesis of aromatic amino acids. Catalyzes the reversible NADPH linked reduction of 3-dehydroshikimate (DHSA) to yield shikimate (SA). The chain is Shikimate dehydrogenase (NADP(+)) from Acinetobacter baumannii (strain ACICU).